A 269-amino-acid polypeptide reads, in one-letter code: Putative hydro-lyase Atu3911 (269 aa).

The protein belongs to the D-glutamate cyclase family.

This chain is Putative hydro-lyase Atu3911, found in Agrobacterium fabrum (strain C58 / ATCC 33970) (Agrobacterium tumefaciens (strain C58)).